The chain runs to 235 residues: Orotidine 5'-phosphate decarboxylase (235 aa).

Substrate-binding positions include Asp-17, Lys-39, 66-75 (DLKLHDIGNT), Thr-121, Arg-182, Gln-191, Gly-211, and Arg-212. The active-site Proton donor is Lys-68.

This sequence belongs to the OMP decarboxylase family. Type 1 subfamily. In terms of assembly, homodimer.

It carries out the reaction orotidine 5'-phosphate + H(+) = UMP + CO2. It functions in the pathway pyrimidine metabolism; UMP biosynthesis via de novo pathway; UMP from orotate: step 2/2. In terms of biological role, catalyzes the decarboxylation of orotidine 5'-monophosphate (OMP) to uridine 5'-monophosphate (UMP). The sequence is that of Orotidine 5'-phosphate decarboxylase from Rhodopseudomonas palustris (strain HaA2).